The sequence spans 119 residues: Phenol 2-monooxygenase, oxygenase component DmpO (119 aa).

As to quaternary structure, the multicomponent enzyme phenol hydroxylase is formed by DmpL (P1 component), DmpM (P2 component), DmpN (P3 component), DmpO (P4 component) and DmpP (P5 component). The oxygenase component is a dimer composed of three subunits, DmpL, DmpN and DmpO (DmpLNO).

It catalyses the reaction phenol + NADH + O2 + H(+) = catechol + NAD(+) + H2O. It participates in aromatic compound metabolism; phenol degradation. Requires DmpM for efficient turnover. The activity of DmpLNO oxygenase is inhibited by dithiothreitol (DTT) by a mechanism apparently involving H(2)O(2) generation. Functionally, part of a multicomponent enzyme which catalyzes the degradation of phenol and some of its methylated derivatives. DmpL, DmpN and DmpO form the oxygenase component of the complex. Required for growth on phenol and for in vitro phenol hydroxylase activity. This is Phenol 2-monooxygenase, oxygenase component DmpO from Pseudomonas sp. (strain CF600).